The primary structure comprises 785 residues: DNA ligase (785 aa).

NAD(+) is bound by residues 32–36 (DAEYD), 81–82 (SL), and Glu-121. The active-site N6-AMP-lysine intermediate is Lys-123. Residues Arg-144, Glu-181, Lys-294, and Lys-318 each coordinate NAD(+). Residues Cys-412, Cys-415, Cys-442, and Cys-448 each contribute to the Zn(2+) site. Residues 702 to 785 (VEGLPEAGHT…AFLAKHNIPV (84 aa)) form the BRCT domain.

This sequence belongs to the NAD-dependent DNA ligase family. LigA subfamily. The cofactor is Mg(2+). Mn(2+) serves as cofactor.

It carries out the reaction NAD(+) + (deoxyribonucleotide)n-3'-hydroxyl + 5'-phospho-(deoxyribonucleotide)m = (deoxyribonucleotide)n+m + AMP + beta-nicotinamide D-nucleotide.. In terms of biological role, DNA ligase that catalyzes the formation of phosphodiester linkages between 5'-phosphoryl and 3'-hydroxyl groups in double-stranded DNA using NAD as a coenzyme and as the energy source for the reaction. It is essential for DNA replication and repair of damaged DNA. In Pseudomonas fluorescens (strain SBW25), this protein is DNA ligase.